A 742-amino-acid polypeptide reads, in one-letter code: Zinc finger protein 700 (742 aa).

Positions 1 to 20 are disordered; the sequence is MPCCSHRSCREDPGTSESRE. Residues 8–20 show a composition bias toward basic and acidic residues; that stretch reads SCREDPGTSESRE. In terms of domain architecture, KRAB spans 24–104; that stretch reads VAFEDVAVNF…KEDSHCGETF (81 aa). 9 C2H2-type zinc fingers span residues 194–216, 222–244, 250–272, 278–300, 306–328, 362–384, 390–412, 418–440, and 446–468; these read YACK…MVMH, YKCK…ERTH, YECK…ERTH, YECS…ERSH, YQCK…ERTH, YKCK…EKTH, YKCK…ERIH, YECK…GGTH, and YECK…GRTH. The segment at 474–502 adopts a C2H2-type 10; degenerate zinc-finger fold; that stretch reads YECKECGKAFRYVKHLQIHERTEKHIRMP. 8 C2H2-type zinc fingers span residues 508–530, 536–558, 564–586, 592–614, 620–642, 648–670, 676–698, and 704–726; these read YKCS…EKTH, YECN…ERTH, YECK…ERTH, YECK…GRTH, YECK…ERKH, and YECK…ARTH.

The protein belongs to the krueppel C2H2-type zinc-finger protein family.

It is found in the nucleus. In terms of biological role, may be involved in transcriptional regulation. The sequence is that of Zinc finger protein 700 (ZNF700) from Homo sapiens (Human).